The primary structure comprises 72 residues: DNA gyrase inhibitor YacG (72 aa).

Residues cysteine 7, cysteine 10, cysteine 26, and cysteine 30 each coordinate Zn(2+). A disordered region spans residues 44-72; the sequence is SIAGEEHTPSSDTARPQLSAEDLALLEQD.

This sequence belongs to the DNA gyrase inhibitor YacG family. Interacts with GyrB. Zn(2+) serves as cofactor.

In terms of biological role, inhibits all the catalytic activities of DNA gyrase by preventing its interaction with DNA. Acts by binding directly to the C-terminal domain of GyrB, which probably disrupts DNA binding by the gyrase. In Tolumonas auensis (strain DSM 9187 / NBRC 110442 / TA 4), this protein is DNA gyrase inhibitor YacG.